A 943-amino-acid chain; its full sequence is Zinc finger BED domain-containing protein 39 (943 aa).

Residues 1–99 (MSSVSSDIDG…DIAMDVSGST (99 aa)) are disordered. The span at 12-21 (PETKRFRIDV) shows a compositional bias: basic and acidic residues. A compositionally biased stretch (low complexity) spans 50–72 (SPAAPSSASYRSSNSSVISSSES). Residues 73–85 (PIKDEDVDVHDGQ) are compositionally biased toward basic and acidic residues. A BED-type; degenerate zinc finger spans residues 184-235 (NKQTPVWKYFVYNKTENLSRCIVGDCTYMLKGPHTSTLACHLKKHTREYSEF). Disordered stretches follow at residues 242–315 (YSRT…KEPS) and 328–348 (RQAT…PQLP). Positions 262-276 (TLQTQNTPRQTGSPA) are enriched in polar residues. The segment covering 277 to 292 (STCNTNSNTSSSVSSG) has biased composition (low complexity). Positions 328-338 (RQATNNSNGSP) are enriched in polar residues.

As to expression, expressed in distal tip cells and in germline cells.

It localises to the nucleus. Its subcellular location is the cytoplasm. In terms of biological role, regulates the timing and orientation of distal tip cell migration during gonadal development. May act in parallel to cacn-1 and Rac GTPases to control the anterior and posterior migration of distal tip cells. In Caenorhabditis elegans, this protein is Zinc finger BED domain-containing protein 39.